A 521-amino-acid chain; its full sequence is Feruloyl esterase B (521 aa).

The first 17 residues, 1-17 (MKVASLLSLALPGAALA), serve as a signal peptide directing secretion. 2 disulfides stabilise this stretch: Cys26–Cys72 and Cys61–Cys111. N-linked (GlcNAc...) asparagine glycosylation is found at Asn37, Asn51, Asn77, Asn95, Asn144, and Asn177. Intrachain disulfides connect Cys184–Cys438, Cys253–Cys270, and Cys279–Cys288. Ser185 functions as the Acyl-ester intermediate in the catalytic mechanism. Residues Asp254, Asp257, Ala259, Asp261, and Ile263 each contribute to the Ca(2+) site. 4 N-linked (GlcNAc...) asparagine glycosylation sites follow: Asn284, Asn347, Asn352, and Asn378. Catalysis depends on charge relay system residues Asp397 and His437. N-linked (GlcNAc...) asparagine glycans are attached at residues Asn488 and Asn511. The cysteines at positions 498 and 520 are disulfide-linked.

Belongs to the tannase family. As to quaternary structure, homodimer. In terms of processing, glycosylated.

The protein resides in the secreted. The enzyme catalyses feruloyl-polysaccharide + H2O = ferulate + polysaccharide.. Its activity is regulated as follows. Inhibited by the specific serine esterase inhibitor AEBSF. In terms of biological role, involved in degradation of plant cell walls. Hydrolyzes of the feruloyl-arabinose ester bond in arabinoxylans as well as the feruloyl-galactose and feruloyl-arabinose ester bonds in pectin. In Aspergillus niger, this protein is Feruloyl esterase B (faeB).